Here is a 667-residue protein sequence, read N- to C-terminus: Protein angel homolog 1 (667 aa).

S77 and S105 each carry phosphoserine.

It belongs to the CCR4/nocturin family.

The sequence is that of Protein angel homolog 1 from Rattus norvegicus (Rat).